Reading from the N-terminus, the 455-residue chain is Kynurenine--oxoglutarate transaminase 3 (455 aa).

A substrate-binding site is contributed by G72. Position 117 is an N6-acetyllysine; alternate (K117). N6-succinyllysine; alternate is present on K117. N219 contacts substrate. K281 is subject to N6-(pyridoxal phosphate)lysine. A substrate-binding site is contributed by R430.

The protein belongs to the class-I pyridoxal-phosphate-dependent aminotransferase family. Homodimer. Requires pyridoxal 5'-phosphate as cofactor. In terms of tissue distribution, widely expressed, with higher expression levels in liver, kidney, heart and neuroendocrine tissues.

It catalyses the reaction L-kynurenine + 2-oxoglutarate = kynurenate + L-glutamate + H2O. The catalysed reaction is L-kynurenine + glyoxylate = kynurenate + glycine + H2O. It carries out the reaction 3-hydroxy-L-kynurenine + glyoxylate = xanthurenate + glycine + H2O. The enzyme catalyses an S-substituted L-cysteine + H2O = a thiol + pyruvate + NH4(+). It functions in the pathway amino-acid degradation; L-kynurenine degradation; kynurenate from L-kynurenine: step 1/2. Kynurenine transamination is competitively inhibited by cysteine, glutamine, histidine, methionine, leucine, or phenylalanine. Catalyzes the irreversible transamination of the L-tryptophan metabolite L-kynurenine to form kynurenic acid (KA), an intermediate in the tryptophan catabolic pathway which is also a broad spectrum antagonist of the three ionotropic excitatory amino acid receptors among others. May catalyze the beta-elimination of S-conjugates and Se-conjugates of L-(seleno)cysteine, resulting in the cleavage of the C-S or C-Se bond. Has transaminase activity towards L-kynurenine, tryptophan, phenylalanine, serine, cysteine, methionine, histidine, glutamine and asparagine with glyoxylate as an amino group acceptor (in vitro). Has lower activity with 2-oxoglutarate as amino group acceptor (in vitro). This Mus musculus (Mouse) protein is Kynurenine--oxoglutarate transaminase 3 (Kyat3).